The sequence spans 354 residues: Replication factor C subunit 5 (354 aa).

Tyr40–Lys47 is a binding site for ATP.

Belongs to the activator 1 small subunits family. Heterotetramer of subunits RFC2, RFC3, RFC4 and RFC5 that can form a complex with RFC1. In terms of tissue distribution, expressed in roots, leaves, shoot apical meristem (SAM), flag leaves and panicles.

The protein localises to the nucleus. Functionally, may be involved in DNA replication and thus regulate cell proliferation. This Oryza sativa subsp. japonica (Rice) protein is Replication factor C subunit 5 (RFC5).